Here is a 503-residue protein sequence, read N- to C-terminus: Splicing factor 3A subunit 3 (503 aa).

Disordered regions lie at residues 296–317 (PALM…EHER) and 341–384 (ATKE…NPKN). Residues 358-377 (DDSDVEASESDNEDDPDADD) are compositionally biased toward acidic residues. Phosphoserine occurs at positions 360, 365, and 367. The segment at 408-439 (YNCEICGNFTYKGPKAFQRHFAEWRHAHGMRC) adopts a Matrin-type zinc-finger fold.

Belongs to the SF3A3 family. In terms of assembly, probable component of a the U2 small nuclear ribonucleoproteins complex (U2 snRNP). As to expression, ubiquitous. In ovaries and testes, it is expressed in all germ and somatic cells. Highly expressed in spermatogonias and spermatocytes. Highly expressed in the germ cells of larval testes, while it is weakly expressed in fat body cells, in polyploid nuclei of salivary glands, and in larval brain.

The protein localises to the nucleus. Probable subunit of a splicing factor complex required for 'A' complex assembly formed by the stable binding of U2 snRNP to the branchpoint sequence (BPS) in pre-mRNA. Involved in male fertility. The sequence is that of Splicing factor 3A subunit 3 (noi) from Drosophila melanogaster (Fruit fly).